The sequence spans 227 residues: Ribose-5-phosphate isomerase A (227 aa).

Substrate is bound by residues 26–29 (TGST), 82–85 (DGAD), and 95–98 (KGGG). Residue Glu-104 is the Proton acceptor of the active site. Lys-122 is a binding site for substrate.

The protein belongs to the ribose 5-phosphate isomerase family. Homodimer.

The catalysed reaction is aldehydo-D-ribose 5-phosphate = D-ribulose 5-phosphate. Its pathway is carbohydrate degradation; pentose phosphate pathway; D-ribose 5-phosphate from D-ribulose 5-phosphate (non-oxidative stage): step 1/1. Its function is as follows. Catalyzes the reversible conversion of ribose-5-phosphate to ribulose 5-phosphate. The sequence is that of Ribose-5-phosphate isomerase A from Streptococcus equi subsp. zooepidemicus (strain MGCS10565).